The sequence spans 277 residues: Inositol monophosphatase 1 (277 aa).

The Mg(2+) site is built by glutamate 70, aspartate 90, isoleucine 92, and aspartate 93. Glutamate 70 serves as a coordination point for substrate. 92–95 (IDGT) provides a ligand contact to substrate. The residue at position 168 (threonine 168) is a Phosphothreonine. Residues 194-196 (GTA), glutamate 213, and aspartate 220 contribute to the substrate site. Mg(2+) is bound at residue aspartate 220.

Belongs to the inositol monophosphatase superfamily. In terms of assembly, homodimer. Mg(2+) is required as a cofactor.

The protein resides in the cytoplasm. It carries out the reaction a myo-inositol phosphate + H2O = myo-inositol + phosphate. The catalysed reaction is 1D-myo-inositol 1-phosphate + H2O = myo-inositol + phosphate. It catalyses the reaction 1D-myo-inositol 2-phosphate + H2O = myo-inositol + phosphate. The enzyme catalyses 1D-myo-inositol 3-phosphate + H2O = myo-inositol + phosphate. It carries out the reaction 1D-myo-inositol 4-phosphate + H2O = myo-inositol + phosphate. The catalysed reaction is 1D-myo-inositol 5-phosphate + H2O = myo-inositol + phosphate. It catalyses the reaction 1D-myo-inositol 6-phosphate + H2O = myo-inositol + phosphate. The enzyme catalyses scyllo-inositol 1-phosphate + H2O = scyllo-inositol + phosphate. It carries out the reaction alpha-D-galactose 1-phosphate + H2O = D-galactose + phosphate. The catalysed reaction is alpha-D-glucose 1-phosphate + H2O = D-glucose + phosphate. It catalyses the reaction D-glucose 6-phosphate + H2O = D-glucose + phosphate. The enzyme catalyses beta-D-fructose 1-phosphate + H2O = D-fructose + phosphate. It carries out the reaction glycerol 2-phosphate + H2O = glycerol + phosphate. The catalysed reaction is adenosine 2'-phosphate + H2O = adenosine + phosphate. It participates in polyol metabolism; myo-inositol biosynthesis; myo-inositol from D-glucose 6-phosphate: step 2/2. Inhibited by Li(+), Ca(2+) and Mn(2+), but also by Mg(2+) at concentrations above 3 mM. Its function is as follows. Phosphatase involved in the dephosphorylation of myo-inositol monophosphate to generate myo-inositol. Is also able to dephosphorylate scyllo-inositol-phosphate, myo-inositol 1,4-diphosphate, scyllo-inositol-1,3-diphosphate and scyllo-inositol-1,4-diphosphate. Also dephosphorylates in vitro other sugar-phosphates including D-galactose-1-phosphate, glucose-1-phosphate, glucose-6-phosphate, fructose-1-phosphate, beta-glycerophosphate and 2'-AMP. Responsible for the provision of inositol required for synthesis of phosphatidylinositol and polyphosphoinositides, and involved in maintaining normal brain function. Has been implicated as the pharmacological target for lithium Li(+) action in brain. This is Inositol monophosphatase 1 (IMPA1) from Sus scrofa (Pig).